Consider the following 183-residue polypeptide: Non-specific lipid transfer protein GPI-anchored 15 (183 aa).

The signal sequence occupies residues 1-24; sequence MGYRRSYAITFVALVAALWSVTKA. 4 cysteine pairs are disulfide-bonded: cysteine 30–cysteine 71, cysteine 40–cysteine 55, cysteine 56–cysteine 97, and cysteine 69–cysteine 107. N-linked (GlcNAc...) asparagine glycans are attached at residues asparagine 47 and asparagine 86. The segment at 108–158 is disordered; it reads NAATGPTAQPPAPSPTEKTPDVTLTPTSLPGARSGVGGGSKTVPSVGTGSS. Positions 149–158 are enriched in polar residues; that stretch reads TVPSVGTGSS. Serine 158 is lipidated: GPI-anchor amidated serine. The propeptide at 159–183 is removed in mature form; sequence SRNVDPLPLHFLMFAVLVVCTSSFL.

It belongs to the plant LTP family. In terms of tissue distribution, expressed in seedlings, preferentially in the endodermis of hypocotyls and roots. Also observed in siliques.

Its subcellular location is the cell membrane. Probable lipid transfer protein. This chain is Non-specific lipid transfer protein GPI-anchored 15, found in Arabidopsis thaliana (Mouse-ear cress).